A 613-amino-acid polypeptide reads, in one-letter code: Dihydroxy-acid dehydratase (613 aa).

A Mg(2+)-binding site is contributed by Asp81. Cys122 contacts [2Fe-2S] cluster. Mg(2+) is bound by residues Asp123 and Lys124. Residue Lys124 is modified to N6-carboxylysine. [2Fe-2S] cluster is bound at residue Cys195. Glu491 provides a ligand contact to Mg(2+). The Proton acceptor role is filled by Ser517.

This sequence belongs to the IlvD/Edd family. Homodimer. [2Fe-2S] cluster is required as a cofactor. It depends on Mg(2+) as a cofactor.

The enzyme catalyses (2R)-2,3-dihydroxy-3-methylbutanoate = 3-methyl-2-oxobutanoate + H2O. It catalyses the reaction (2R,3R)-2,3-dihydroxy-3-methylpentanoate = (S)-3-methyl-2-oxopentanoate + H2O. Its pathway is amino-acid biosynthesis; L-isoleucine biosynthesis; L-isoleucine from 2-oxobutanoate: step 3/4. It functions in the pathway amino-acid biosynthesis; L-valine biosynthesis; L-valine from pyruvate: step 3/4. In terms of biological role, functions in the biosynthesis of branched-chain amino acids. Catalyzes the dehydration of (2R,3R)-2,3-dihydroxy-3-methylpentanoate (2,3-dihydroxy-3-methylvalerate) into 2-oxo-3-methylpentanoate (2-oxo-3-methylvalerate) and of (2R)-2,3-dihydroxy-3-methylbutanoate (2,3-dihydroxyisovalerate) into 2-oxo-3-methylbutanoate (2-oxoisovalerate), the penultimate precursor to L-isoleucine and L-valine, respectively. This is Dihydroxy-acid dehydratase from Hyphomonas neptunium (strain ATCC 15444).